Reading from the N-terminus, the 1020-residue chain is MESYLNENFGDVKPKNSSDEALQRWRKLCWIVKNPKRRFRFTANLSKRSEAEAIRRSNQEKFRVAVLVSQAALQFINSLKLSSEYTLPEEVRKAGFEICPDELGSIVEGHDLKKLKIHGGTEGLTEKLSTSIASGISTSEDLLSVRKEIYGINQFTESPSRGFWLFVWEALQDTTLMILAACAFVSLIVGILMEGWPIGAHDGLGIVASILLVVFVTATSDYRQSLQFKDLDAEKKKIVVQVTRDKLRQKISIYDLLPGDVVHLGIGDQIPADGLFISGFSVLINESSLTGESEPVSVSVEHPFLLSGTKVQDGSCKMLVTTVGMRTQWGKLMATLSEGGDDETPLQVKLNGVATIIGKIGLFFAVITFAVLVQGLANQKRLDNSHWIWTADELMAMLEYFAVAVTIVVVAVPEGLPLAVTLSLAFAMKKMMNDKALVRNLAACETMGSATTICSDKTGTLTTNHMTVVKACICEQAKEVNGPDAAMKFASGIPESAVKLLLQSIFTNTGGEIVVGKGNKTEILGTPTETALLEFGLSLGGDFQEVRQASNVVKVEPFNSTKKRMGVVIELPERHFRAHCKGASEIVLDSCDKYINKDGEVVPLDEKSTSHLKNIIEEFASEALRTLCLAYFEIGDEFSLEAPIPSGGYTCIGIVGIKDPVRPGVKESVAICKSAGITVRMVTGDNLTTAKAIARECGILTDDGIAIEGPEFREKSDEELLKLIPKLQVMARSSPMDKHTLVRLLRTMFQEVVAVTGDGTNDAPALHEADIGLAMGISGTEVAKESADVIILDDNFSTIVTVAKWGRSVYINIQKFVQFQLTVNVVALIVNFLSACLTGNAPLTAVQLLWVNMIMDTLGALALATEPPQDDLMKRSPVGRKGNFISNVMWRNILGQSLYQLVIIWCLQTKGKTMFGLDGPDSDLTLNTLIFNIFVFCQVFNEISSREMEKIDVFKGILKNYVFVAVLTCTVVFQVIIIELLGTFADTTPLNLGQWLVSIILGFLGMPVAAALKMIPVGSH.

M1 is subject to N-acetylmethionine. Topologically, residues 1–162 (MESYLNENFG…NQFTESPSRG (162 aa)) are stromal. The interaction with calmodulin stretch occupies residues 21-32 (ALQRWRKLCWIV). A Phosphoserine; by CPK modification is found at S46. The helical transmembrane segment at 163–183 (FWLFVWEALQDTTLMILAACA) threads the bilayer. At 184-201 (FVSLIVGILMEGWPIGAH) the chain is on the lumenal side. Residues 202–222 (DGLGIVASILLVVFVTATSDY) traverse the membrane as a helical segment. Residues 223-350 (RQSLQFKDLD…DDETPLQVKL (128 aa)) are Stromal-facing. Residues 351-370 (NGVATIIGKIGLFFAVITFA) form a helical membrane-spanning segment. Residues 371 to 400 (VLVQGLANQKRLDNSHWIWTADELMAMLEY) are Lumenal-facing. Residues 401-418 (FAVAVTIVVVAVPEGLPL) form a helical membrane-spanning segment. Topologically, residues 419–813 (AVTLSLAFAM…KWGRSVYINI (395 aa)) are stromal. The 4-aspartylphosphate intermediate role is filled by D456. D758 and D762 together coordinate Mg(2+). Residues 814–832 (QKFVQFQLTVNVVALIVNF) form a helical membrane-spanning segment. Residues 833 to 843 (LSACLTGNAPL) are Lumenal-facing. The chain crosses the membrane as a helical span at residues 844 to 864 (TAVQLLWVNMIMDTLGALALA). Residues 865 to 884 (TEPPQDDLMKRSPVGRKGNF) lie on the Stromal side of the membrane. The helical transmembrane segment at 885 to 907 (ISNVMWRNILGQSLYQLVIIWCL) threads the bilayer. Over 908 to 919 (QTKGKTMFGLDG) the chain is Lumenal. A helical membrane pass occupies residues 920–941 (PDSDLTLNTLIFNIFVFCQVFN). Topologically, residues 942 to 959 (EISSREMEKIDVFKGILK) are stromal. The helical transmembrane segment at 960-981 (NYVFVAVLTCTVVFQVIIIELL) threads the bilayer. Residues 982–991 (GTFADTTPLN) are Lumenal-facing. A helical membrane pass occupies residues 992–1013 (LGQWLVSIILGFLGMPVAAALK). At 1014-1020 (MIPVGSH) the chain is on the stromal side.

This sequence belongs to the cation transport ATPase (P-type) (TC 3.A.3) family. Type IIB subfamily. In terms of tissue distribution, expressed at higher levels in roots than in leaves.

The protein resides in the plastid. Its subcellular location is the chloroplast inner membrane. It catalyses the reaction Ca(2+)(in) + ATP + H2O = Ca(2+)(out) + ADP + phosphate + H(+). Its activity is regulated as follows. Activated by calmodulin. Functionally, this magnesium-dependent enzyme catalyzes the hydrolysis of ATP coupled with the translocation of calcium from the cytosol out of the cell or into organelles. In Arabidopsis thaliana (Mouse-ear cress), this protein is Calcium-transporting ATPase 1 (ACA1).